We begin with the raw amino-acid sequence, 430 residues long: Adenylosuccinate synthetase (430 aa).

Residues 12-18 and 40-42 contribute to the GTP site; these read GDEGKGK and GHT. Aspartate 13 acts as the Proton acceptor in catalysis. Residues aspartate 13 and glycine 40 each coordinate Mg(2+). Residues 13-16, 38-41, threonine 129, arginine 143, glutamine 224, threonine 239, and arginine 303 contribute to the IMP site; these read DEGK and NAGH. Histidine 41 serves as the catalytic Proton donor. Position 299–305 (299–305) interacts with substrate; sequence ATTGRRR. Residues arginine 305, 331–333, and 413–415 each bind GTP; these read KLD and SVG.

This sequence belongs to the adenylosuccinate synthetase family. Homodimer. Requires Mg(2+) as cofactor.

The protein resides in the cytoplasm. The catalysed reaction is IMP + L-aspartate + GTP = N(6)-(1,2-dicarboxyethyl)-AMP + GDP + phosphate + 2 H(+). It functions in the pathway purine metabolism; AMP biosynthesis via de novo pathway; AMP from IMP: step 1/2. Its function is as follows. Plays an important role in the de novo pathway of purine nucleotide biosynthesis. Catalyzes the first committed step in the biosynthesis of AMP from IMP. This is Adenylosuccinate synthetase from Desulfatibacillum aliphaticivorans.